The primary structure comprises 361 residues: Phospho-N-acetylmuramoyl-pentapeptide-transferase (361 aa).

10 helical membrane-spanning segments follow: residues 25 to 45, 73 to 93, 97 to 117, 134 to 154, 168 to 188, 200 to 220, 240 to 260, 264 to 284, 289 to 309, and 338 to 358; these read RAVL…PWVI, TMGG…WADL, YVWL…YDDW, MFWQ…TASL, VIYP…IVGT, GLAA…AYVA, VAVF…FNAY, VFMG…VAVI, IVLF…MIQV, and QVVV…LSTL.

The protein belongs to the glycosyltransferase 4 family. MraY subfamily. The cofactor is Mg(2+).

It is found in the cell inner membrane. The catalysed reaction is UDP-N-acetyl-alpha-D-muramoyl-L-alanyl-gamma-D-glutamyl-meso-2,6-diaminopimeloyl-D-alanyl-D-alanine + di-trans,octa-cis-undecaprenyl phosphate = di-trans,octa-cis-undecaprenyl diphospho-N-acetyl-alpha-D-muramoyl-L-alanyl-D-glutamyl-meso-2,6-diaminopimeloyl-D-alanyl-D-alanine + UMP. Its pathway is cell wall biogenesis; peptidoglycan biosynthesis. Its function is as follows. Catalyzes the initial step of the lipid cycle reactions in the biosynthesis of the cell wall peptidoglycan: transfers peptidoglycan precursor phospho-MurNAc-pentapeptide from UDP-MurNAc-pentapeptide onto the lipid carrier undecaprenyl phosphate, yielding undecaprenyl-pyrophosphoryl-MurNAc-pentapeptide, known as lipid I. In Laribacter hongkongensis (strain HLHK9), this protein is Phospho-N-acetylmuramoyl-pentapeptide-transferase.